The primary structure comprises 395 residues: Elongation factor Tu (395 aa).

One can recognise a tr-type G domain in the interval 10–204 (KPHVNIGTIG…EVDAYIPTPE (195 aa)). A G1 region spans residues 19–26 (GHVDHGKT). Residue 19–26 (GHVDHGKT) participates in GTP binding. Residue Thr-26 coordinates Mg(2+). A G2 region spans residues 60 to 64 (GITIS). The interval 81 to 84 (DCPG) is G3. Residues 81–85 (DCPGH) and 136–139 (NKCD) contribute to the GTP site. The segment at 136–139 (NKCD) is G4. Residues 174-176 (SAL) are G5.

The protein belongs to the TRAFAC class translation factor GTPase superfamily. Classic translation factor GTPase family. EF-Tu/EF-1A subfamily. As to quaternary structure, monomer.

Its subcellular location is the cytoplasm. The catalysed reaction is GTP + H2O = GDP + phosphate + H(+). In terms of biological role, GTP hydrolase that promotes the GTP-dependent binding of aminoacyl-tRNA to the A-site of ribosomes during protein biosynthesis. This chain is Elongation factor Tu, found in Bacillus cereus (strain G9842).